A 174-amino-acid chain; its full sequence is UPF0113 protein AF_0058 (174 aa).

The PUA domain occupies 87–161; the sequence is RNRVWVNERG…KVFVENLVDR (75 aa).

Belongs to the UPF0113 family.

The polypeptide is UPF0113 protein AF_0058 (Archaeoglobus fulgidus (strain ATCC 49558 / DSM 4304 / JCM 9628 / NBRC 100126 / VC-16)).